Reading from the N-terminus, the 91-residue chain is UPF0223 protein SAB0963 (91 aa).

The protein belongs to the UPF0223 family.

The protein is UPF0223 protein SAB0963 of Staphylococcus aureus (strain bovine RF122 / ET3-1).